We begin with the raw amino-acid sequence, 476 residues long: Cytosolic iron-sulfur assembly component 3 (476 aa).

Residue Ala2 is modified to N-acetylalanine. Residues Cys24, Cys71, Cys74, Cys77, Cys190, and Cys246 each coordinate [4Fe-4S] cluster. A disordered region spans residues 297–316 (DGLTSSVSAEEPSSHRGGGS). Cys395 and Cys399 together coordinate [4Fe-4S] cluster.

Belongs to the NARF family. As to quaternary structure, external component of the CIA complex. In the CIA complex, interacts directly with CIAO1 and MMS19.

Its function is as follows. Component of the cytosolic iron-sulfur protein assembly (CIA) complex, a multiprotein complex that mediates the incorporation of iron-sulfur cluster into extramitochondrial Fe/S proteins. Seems to negatively regulate the level of HIF1A expression, although this effect could be indirect. The polypeptide is Cytosolic iron-sulfur assembly component 3 (Ciao3) (Mus musculus (Mouse)).